A 101-amino-acid chain; its full sequence is Nucleoid-associated protein Cla_0113 (101 aa).

Belongs to the YbaB/EbfC family. In terms of assembly, homodimer.

The protein localises to the cytoplasm. The protein resides in the nucleoid. Its function is as follows. Binds to DNA and alters its conformation. May be involved in regulation of gene expression, nucleoid organization and DNA protection. The chain is Nucleoid-associated protein Cla_0113 from Campylobacter lari (strain RM2100 / D67 / ATCC BAA-1060).